We begin with the raw amino-acid sequence, 806 residues long: Glycerol-3-phosphate acyltransferase (806 aa).

The HXXXXD motif signature appears at 305–310; that stretch reads CHRSHM.

This sequence belongs to the GPAT/DAPAT family.

It localises to the cell inner membrane. It catalyses the reaction sn-glycerol 3-phosphate + an acyl-CoA = a 1-acyl-sn-glycero-3-phosphate + CoA. Its pathway is phospholipid metabolism; CDP-diacylglycerol biosynthesis; CDP-diacylglycerol from sn-glycerol 3-phosphate: step 1/3. The protein is Glycerol-3-phosphate acyltransferase of Salmonella paratyphi B (strain ATCC BAA-1250 / SPB7).